Reading from the N-terminus, the 414-residue chain is Mannan endo-1,4-beta-mannosidase 2 (414 aa).

An N-terminal signal peptide occupies residues 1–25 (MAYFQRLISCIFVLFLLSLAFACEA). Residues Trp-95 and Asn-210 each contribute to the substrate site. Glu-211 (proton donor) is an active-site residue. Tyr-288 lines the substrate pocket. Glu-328 acts as the Nucleophile in catalysis. Trp-370 contributes to the substrate binding site.

It belongs to the glycosyl hydrolase 5 (cellulase A) family.

The protein localises to the secreted. It catalyses the reaction Random hydrolysis of (1-&gt;4)-beta-D-mannosidic linkages in mannans, galactomannans and glucomannans.. Functionally, possesses endo-beta-mannanase activity in vitro. May be involved in seed germination by weakening the endosperm cap prior to radicle emergence. The sequence is that of Mannan endo-1,4-beta-mannosidase 2 (MAN2) from Solanum lycopersicum (Tomato).